The sequence spans 90 residues: Probable Fe(2+)-trafficking protein (90 aa).

This sequence belongs to the Fe(2+)-trafficking protein family.

Functionally, could be a mediator in iron transactions between iron acquisition and iron-requiring processes, such as synthesis and/or repair of Fe-S clusters in biosynthetic enzymes. This Chromohalobacter salexigens (strain ATCC BAA-138 / DSM 3043 / CIP 106854 / NCIMB 13768 / 1H11) protein is Probable Fe(2+)-trafficking protein.